Consider the following 260-residue polypeptide: MKSPVAGAVLDPSTPPPTTGTSWRWPGLRDADPYREARLRMVEQLRRSGLVTSRRVLEAMARVPRHLFVPPEYRGMAYEDRPLPIGHGQTISAPGVVGRMLQLLDPQPGEKVLDVGAGSGYQSALLAELVTPGGRVYAVERIPELAEYARENLEKTGYRGVVEVVVGDGSKGLPQHAPYHRIKVAAAAPKPPKPLVEQLAPGGRMVIPIGTPDLQILTIIEKTPDGRVRERRDIEVLFVPLIGEHGYREDWRKQYWQWWR.

A disordered region spans residues 1 to 27; the sequence is MKSPVAGAVLDPSTPPPTTGTSWRWPG. S92 is a catalytic residue.

It belongs to the methyltransferase superfamily. L-isoaspartyl/D-aspartyl protein methyltransferase family.

It localises to the cytoplasm. The enzyme catalyses [protein]-L-isoaspartate + S-adenosyl-L-methionine = [protein]-L-isoaspartate alpha-methyl ester + S-adenosyl-L-homocysteine. In terms of biological role, catalyzes the methyl esterification of L-isoaspartyl residues in peptides and proteins that result from spontaneous decomposition of normal L-aspartyl and L-asparaginyl residues. It plays a role in the repair and/or degradation of damaged proteins. This Aeropyrum pernix (strain ATCC 700893 / DSM 11879 / JCM 9820 / NBRC 100138 / K1) protein is Protein-L-isoaspartate O-methyltransferase (pcm).